Consider the following 382-residue polypeptide: Norsolorinic acid reductase B (382 aa).

Position 64 (Asp-64) interacts with NADP(+). Tyr-69 serves as the catalytic Proton donor. Residue His-143 participates in substrate binding. NADP(+)-binding positions include 173–174, Gln-199, 228–238, and 302–310; these read SD, GVLNQGRFRTE, and RKVDHLTGV.

This sequence belongs to the aldo/keto reductase family. Aldo/keto reductase 2 subfamily.

It functions in the pathway mycotoxin biosynthesis; aflatoxin biosynthesis. Its function is as follows. Norsolorinic acid reductase; part of the gene cluster that mediates the biosynthesis of aflatoxins, a group of polyketide-derived furanocoumarins, and part of the most toxic and carcinogenic compounds among the known mycotoxins. The four major aflatoxins produced by A.parasiticus are aflatoxin B1 (AFB1), aflatoxin B2 (AFB2), aflatoxin G1 (AFG1) and aflatoxin G2 (AFG2). Within the aflatoxin pathway, the norsolorinic acid reductase aflE may play a role in the conversion of norsolorinic acid (NOR) to averantin (AVN). The biosynthesis of aflatoxins begins with the norsolorinic acid synthase aflC that combines a hexanoyl starter unit produced by the fatty acid synthase aflA/aflB and 7 malonyl-CoA extender units to synthesize the precursor NOR. The second step is the conversion of NOR to averantin and requires the norsolorinic acid ketoreductase aflD, which catalyzes the dehydration of norsolorinic acid to form (1'S)-averantin. The norsolorinic acid reductases aflE and aflF may also play a role in the conversion of NOR to AVN. The cytochrome P450 monooxygenase aflG then catalyzes the hydroxylation of AVN to 5'hydroxyaverantin (HAVN). The next step is performed by the 5'-hydroxyaverantin dehydrogenase aflH that transforms HAVN to 5'-oxoaverantin (OAVN) which is further converted to averufin (AVF) by aflK that plays a dual role in the pathway, as a 5'-oxoaverantin cyclase that mediates conversion of 5'-oxoaverantin, as well as a versicolorin B synthase in a later step in the pathway. The averufin oxidase aflI catalyzes the conversion of AVF to versiconal hemiacetal acetate (VHA). VHA is then the substrate for the versiconal hemiacetal acetate esterase aflJ to yield versiconal (VAL). Versicolorin B synthase aflK then converts VAL to versicolorin B (VERB) by closing the bisfuran ring of aflatoxin which is required for DNA-binding, thus giving to aflatoxin its activity as a mutagen. Then, the activity of the versicolorin B desaturase aflL leads to versicolorin A (VERA). A branch point starts from VERB since it can also be converted to dihydrodemethylsterigmatocystin (DMDHST), probably also by aflL, VERA being a precursor for aflatoxins B1 and G1, and DMDHST for aflatoxins B2 and G2. Next, the versicolorin reductase aflM and the cytochrome P450 monooxygenase aflN are involved in conversion of VERA to demethylsterigmatocystin (DMST). AflX and aflY seem also involved in this step, through probable aflX-mediated epoxide ring-opening step following versicolorin A oxidation and aflY-mediated Baeyer-Villiger oxidation required for the formation of the xanthone ring. The methyltransferase aflO then leads to the modification of DMST to sterigmatocystin (ST), and of DMDHST to dihydrosterigmatocystin (DHST). Both ST and DHST are then substrates of the O-methyltransferase aflP to yield O-methylsterigmatocystin (OMST) and dihydro-O-methylsterigmatocystin (DHOMST), respectively. Finally OMST is converted to aflatoxins B1 and G1, and DHOMST to aflatoxins B2 and G2, via the action of several enzymes including O-methylsterigmatocystin oxidoreductase aflQ, the cytochrome P450 monooxygenase aflU, but also the NADH-dependent flavin oxidoreductase nadA which is specifically required for the synthesis of AFG1. The polypeptide is Norsolorinic acid reductase B (Aspergillus parasiticus (strain ATCC 56775 / NRRL 5862 / SRRC 143 / SU-1)).